A 443-amino-acid chain; its full sequence is Glutamate-1-semialdehyde 2,1-aminomutase (443 aa).

Lys-272 is subject to N6-(pyridoxal phosphate)lysine.

The protein belongs to the class-III pyridoxal-phosphate-dependent aminotransferase family. HemL subfamily. As to quaternary structure, homodimer. Requires pyridoxal 5'-phosphate as cofactor.

The protein resides in the cytoplasm. The catalysed reaction is (S)-4-amino-5-oxopentanoate = 5-aminolevulinate. The protein operates within porphyrin-containing compound metabolism; protoporphyrin-IX biosynthesis; 5-aminolevulinate from L-glutamyl-tRNA(Glu): step 2/2. It participates in porphyrin-containing compound metabolism; chlorophyll biosynthesis. The sequence is that of Glutamate-1-semialdehyde 2,1-aminomutase from Chloroflexus aurantiacus (strain ATCC 29366 / DSM 635 / J-10-fl).